A 917-amino-acid polypeptide reads, in one-letter code: Isoleucine--tRNA ligase (917 aa).

Residues 57–67 (PYANGNLHMGH) carry the 'HIGH' region motif. Glu-554 lines the L-isoleucyl-5'-AMP pocket. The 'KMSKS' region signature appears at 595–599 (KMSKS). Lys-598 provides a ligand contact to ATP. Zn(2+)-binding residues include Cys-886, Cys-889, Cys-906, and Cys-909.

This sequence belongs to the class-I aminoacyl-tRNA synthetase family. IleS type 1 subfamily. In terms of assembly, monomer. Requires Zn(2+) as cofactor.

It is found in the cytoplasm. The catalysed reaction is tRNA(Ile) + L-isoleucine + ATP = L-isoleucyl-tRNA(Ile) + AMP + diphosphate. Catalyzes the attachment of isoleucine to tRNA(Ile). As IleRS can inadvertently accommodate and process structurally similar amino acids such as valine, to avoid such errors it has two additional distinct tRNA(Ile)-dependent editing activities. One activity is designated as 'pretransfer' editing and involves the hydrolysis of activated Val-AMP. The other activity is designated 'posttransfer' editing and involves deacylation of mischarged Val-tRNA(Ile). The protein is Isoleucine--tRNA ligase of Staphylococcus aureus (strain Mu3 / ATCC 700698).